Here is a 512-residue protein sequence, read N- to C-terminus: Glutathione-binding protein GsiB (512 aa).

The N-terminal stretch at 1–26 (MTQFITHKWLAALGLASSIAAFPALA) is a signal peptide.

It belongs to the bacterial solute-binding protein 5 family. In terms of assembly, the complex is composed of two ATP-binding proteins (GsiA), two transmembrane proteins (GsiC and GsiD) and a solute-binding protein (GsiB).

The protein resides in the periplasm. In terms of biological role, part of the ABC transporter complex GsiABCD involved in glutathione import. Binds glutathione. The polypeptide is Glutathione-binding protein GsiB (Salmonella choleraesuis (strain SC-B67)).